A 162-amino-acid chain; its full sequence is Nucleotide-binding protein SAV_4896 (162 aa).

The protein belongs to the YajQ family.

Nucleotide-binding protein. This is Nucleotide-binding protein SAV_4896 from Streptomyces avermitilis (strain ATCC 31267 / DSM 46492 / JCM 5070 / NBRC 14893 / NCIMB 12804 / NRRL 8165 / MA-4680).